The sequence spans 227 residues: MAHAAQMGLQDATSPIMEELISFHDHALMIIFLISFLVLYALFLTLTTKLTNTNITDAQEMETVWTILPAIILVLIALPSLRILYLTDEINDPSFTIKAIGHQWYWAYEYTDYGGLIFNSYMLPPLFLEPGDLRLLEVDNRVVLPIEAPVRMMITSQDVLHSWTVPSLGLKTDAIPGRLNQTTFTATRPGVYYGQCSEICGANHSFMPIVLELIPLKIFEMGPVFTL.

The Mitochondrial intermembrane segment spans residues 1-14; sequence MAHAAQMGLQDATS. A helical membrane pass occupies residues 15-45; sequence PIMEELISFHDHALMIIFLISFLVLYALFLT. The Mitochondrial matrix segment spans residues 46 to 59; the sequence is LTTKLTNTNITDAQ. The helical transmembrane segment at 60–87 threads the bilayer; the sequence is EMETVWTILPAIILVLIALPSLRILYLT. Residues 88 to 227 lie on the Mitochondrial intermembrane side of the membrane; it reads DEINDPSFTI…IFEMGPVFTL (140 aa). Cu cation is bound by residues His161, Cys196, Glu198, Cys200, His204, and Met207. Glu198 provides a ligand contact to Mg(2+).

This sequence belongs to the cytochrome c oxidase subunit 2 family. In terms of assembly, component of the cytochrome c oxidase (complex IV, CIV), a multisubunit enzyme composed of 14 subunits. The complex is composed of a catalytic core of 3 subunits MT-CO1, MT-CO2 and MT-CO3, encoded in the mitochondrial DNA, and 11 supernumerary subunits COX4I, COX5A, COX5B, COX6A, COX6B, COX6C, COX7A, COX7B, COX7C, COX8 and NDUFA4, which are encoded in the nuclear genome. The complex exists as a monomer or a dimer and forms supercomplexes (SCs) in the inner mitochondrial membrane with NADH-ubiquinone oxidoreductase (complex I, CI) and ubiquinol-cytochrome c oxidoreductase (cytochrome b-c1 complex, complex III, CIII), resulting in different assemblies (supercomplex SCI(1)III(2)IV(1) and megacomplex MCI(2)III(2)IV(2)). Found in a complex with TMEM177, COA6, COX18, COX20, SCO1 and SCO2. Interacts with TMEM177 in a COX20-dependent manner. Interacts with COX20. Interacts with COX16. It depends on Cu cation as a cofactor.

It localises to the mitochondrion inner membrane. It catalyses the reaction 4 Fe(II)-[cytochrome c] + O2 + 8 H(+)(in) = 4 Fe(III)-[cytochrome c] + 2 H2O + 4 H(+)(out). Its function is as follows. Component of the cytochrome c oxidase, the last enzyme in the mitochondrial electron transport chain which drives oxidative phosphorylation. The respiratory chain contains 3 multisubunit complexes succinate dehydrogenase (complex II, CII), ubiquinol-cytochrome c oxidoreductase (cytochrome b-c1 complex, complex III, CIII) and cytochrome c oxidase (complex IV, CIV), that cooperate to transfer electrons derived from NADH and succinate to molecular oxygen, creating an electrochemical gradient over the inner membrane that drives transmembrane transport and the ATP synthase. Cytochrome c oxidase is the component of the respiratory chain that catalyzes the reduction of oxygen to water. Electrons originating from reduced cytochrome c in the intermembrane space (IMS) are transferred via the dinuclear copper A center (CU(A)) of subunit 2 and heme A of subunit 1 to the active site in subunit 1, a binuclear center (BNC) formed by heme A3 and copper B (CU(B)). The BNC reduces molecular oxygen to 2 water molecules using 4 electrons from cytochrome c in the IMS and 4 protons from the mitochondrial matrix. In Symphalangus syndactylus (Siamang), this protein is Cytochrome c oxidase subunit 2 (MT-CO2).